The sequence spans 298 residues: Acetyl-coenzyme A carboxylase carboxyl transferase subunit beta (298 aa).

Residues 25 to 295 form the CoA carboxyltransferase N-terminal domain; it reads VWAKCANCGE…SADHREHVVA (271 aa). Zn(2+) contacts are provided by cysteine 29, cysteine 32, cysteine 48, and cysteine 51. The C4-type zinc-finger motif lies at 29–51; the sequence is CANCGELTYQKQFNDALKVCPKC.

The protein belongs to the AccD/PCCB family. In terms of assembly, acetyl-CoA carboxylase is a heterohexamer composed of biotin carboxyl carrier protein (AccB), biotin carboxylase (AccC) and two subunits each of ACCase subunit alpha (AccA) and ACCase subunit beta (AccD). Requires Zn(2+) as cofactor.

Its subcellular location is the cytoplasm. The enzyme catalyses N(6)-carboxybiotinyl-L-lysyl-[protein] + acetyl-CoA = N(6)-biotinyl-L-lysyl-[protein] + malonyl-CoA. Its pathway is lipid metabolism; malonyl-CoA biosynthesis; malonyl-CoA from acetyl-CoA: step 1/1. Component of the acetyl coenzyme A carboxylase (ACC) complex. Biotin carboxylase (BC) catalyzes the carboxylation of biotin on its carrier protein (BCCP) and then the CO(2) group is transferred by the transcarboxylase to acetyl-CoA to form malonyl-CoA. This Herpetosiphon aurantiacus (strain ATCC 23779 / DSM 785 / 114-95) protein is Acetyl-coenzyme A carboxylase carboxyl transferase subunit beta.